The chain runs to 198 residues: Prostamide/prostaglandin F synthase (198 aa).

Y108 is subject to Phosphotyrosine.

This sequence belongs to the peroxiredoxin-like PRXL2 family. Prostamide/prostaglandin F synthase subfamily.

It is found in the cytoplasm. It localises to the cytosol. It carries out the reaction prostaglandin H2 + [thioredoxin]-dithiol = prostaglandin F2alpha + [thioredoxin]-disulfide. It catalyses the reaction prostamide F2alpha + [thioredoxin]-disulfide = prostamide H2 + [thioredoxin]-dithiol. In terms of biological role, catalyzes the reduction of prostaglandin-ethanolamide H(2) (prostamide H(2)) to prostamide F(2alpha) with NADPH as proton donor. Also able to reduce prostaglandin H(2) to prostaglandin F(2alpha). The protein is Prostamide/prostaglandin F synthase of Homo sapiens (Human).